A 357-amino-acid polypeptide reads, in one-letter code: 3-isopropylmalate dehydrogenase (357 aa).

Arg-97, Arg-107, Arg-135, and Asp-224 together coordinate substrate. Mg(2+)-binding residues include Asp-224, Asp-248, and Asp-252. 282–294 (GSAPDIAGQDKAN) is an NAD(+) binding site.

This sequence belongs to the isocitrate and isopropylmalate dehydrogenases family. LeuB type 1 subfamily. As to quaternary structure, homodimer. Requires Mg(2+) as cofactor. Mn(2+) is required as a cofactor.

Its subcellular location is the cytoplasm. The enzyme catalyses (2R,3S)-3-isopropylmalate + NAD(+) = 4-methyl-2-oxopentanoate + CO2 + NADH. Its pathway is amino-acid biosynthesis; L-leucine biosynthesis; L-leucine from 3-methyl-2-oxobutanoate: step 3/4. Its function is as follows. Catalyzes the oxidation of 3-carboxy-2-hydroxy-4-methylpentanoate (3-isopropylmalate) to 3-carboxy-4-methyl-2-oxopentanoate. The product decarboxylates to 4-methyl-2 oxopentanoate. This is 3-isopropylmalate dehydrogenase from Synechococcus sp. (strain CC9605).